A 2549-amino-acid chain; its full sequence is Serine/threonine-protein kinase mTOR (2549 aa).

Met-1 carries the N-acetylmethionine modification. Positions 1 to 651 (MLGTGPAAAT…HVVSQTAVQV (651 aa)) are interaction with NBN. 32 HEAT repeats span residues 16 to 53 (SSNV…MELR), 55 to 99 (MSQE…VEGG), 100 to 137 (NATR…AMAG), 138 to 179 (DTFT…AISV), 180 to 220 (PTFF…LILT), 222 to 276 (QREP…RISS), 277 to 313 (MEGE…PRHI), 314 to 364 (TPFT…CCRD), 365 to 409 (LMEE…AFTD), 410 to 445 (TQYL…VAVR), 446 to 494 (SEFK…RAMG), 495 to 529 (PGIQ…RQIP), 530 to 563 (QLKK…GLAH), 564 to 596 (QLAS…EFEG), 597 to 636 (HSLT…SIHL), 637 to 683 (ISGH…DERF), 686 to 724 (HLAQ…MNPA), 727 to 766 (MPFL…NAPR), 769 to 811 (RPYM…VSGL), 814 to 853 (RKWV…STGY), 857 to 893 (PYRK…LLGA), 894 to 942 (LDPY…GNLP), 943 to 988 (LDEF…KCVQ), 989 to 1027 (FLPQ…KSHI), 1029 to 1068 (PYMD…GEFK), 1069 to 1105 (LYLP…LFGA), 1106 to 1144 (NLDD…RLTE), 1145 to 1188 (SLDF…GKKY), 1189 to 1225 (QIFI…LADE), 1226 to 1273 (EEDP…GAAR), 1274 to 1311 (RVSK…QAYN), and 1312 to 1345 (PMAR…ELAL). Ser-567 bears the Phosphoserine mark. Residue Thr-1162 is modified to Phosphothreonine. Position 1218 is an N6-acetyllysine (Lys-1218). At Ser-1261 the chain carries Phosphoserine. TPR repeat units follow at residues 1346–1382 (TSQD…GIVL), 1383–1408 (LGER…QKGP), 1409–1442 (TPAI…HFGE), 1443–1473 (LEIQ…NKDD), 1474–1507 (PELM…VNDE), 1508–1541 (TQAK…RDTH), 1542–1574 (DGAF…LDAE), 1575–1614 (LTAM…RREI), 1615–1649 (IRQI…PHED), 1650–1693 (MRTW…PTVH), 1694–1731 (PQVT…AQHA), 1732–1786 (IATE…DRSW), 1787–1846 (YKAW…STEG), 1898–1930 (NNLQ…VKAI), 1931–1970 (QIDT…YHPQ), and 1971–2005 (ALIY…SNTL). The FAT domain maps to 1382 to 1982 (LLGERAAKCR…IYPLTVASKS (601 aa)). 1D-myo-inositol hexakisphosphate-binding residues include Lys-1662, Lys-1702, and Arg-1749. The tract at residues 1812 to 1867 (DEKKKLRHASGANITNATTAATTAATATTTASTEGSNSESEAESTENSPTPSPLQK) is disordered. Over residues 1820-1860 (ASGANITNATTAATTAATATTTASTEGSNSESEAESTENSP) the composition is skewed to low complexity. The interval 2012–2144 (VSEELIRVAI…DLELAVPGTY (133 aa)) is sufficient for interaction with the FKBP1A/rapamycin complex. Lys-2066 participates in a covalent cross-link: Glycyl lysine isopeptide (Lys-Gly) (interchain with G-Cter in ubiquitin). A PI3K/PI4K catalytic domain is found at 2156-2469 (IAPSLQVITS…GVELGEPAHK (314 aa)). Ser-2159 bears the Phosphoserine; by TBK1 mark. The G-loop stretch occupies residues 2162–2168 (VITSKQR). Residue Thr-2164 is modified to Phosphothreonine. 2 residues coordinate ATP: Ser-2165 and Gln-2167. Thr-2173 is subject to Phosphothreonine; by PKB/AKT1. Residues Leu-2185, Lys-2187, Glu-2190, Tyr-2225, Gly-2238, Trp-2239, Val-2240, and Thr-2245 each contribute to the ATP site. An interaction with MLST8 region spans residues 2258-2296 (KILLNIEHRIMLRMAPDYDHLTLMQKVEVFEHAVNNTAG). The catalytic loop stretch occupies residues 2335–2343 (GLGDRHPSN). Asn-2343 is a Mg(2+) binding site. Residues Met-2345 and Ile-2356 each contribute to the ATP site. An activation loop region spans residues 2355-2380 (HIDFGDCFEVAMTREKFPEKIPFRLT). Mg(2+) is bound at residue Asp-2357. Phosphothreonine; by RPS6KB1 is present on Thr-2446. Ser-2448 carries the post-translational modification Phosphoserine; by RPS6KB1. At Ser-2478 the chain carries Phosphoserine. The residue at position 2481 (Ser-2481) is a Phosphoserine; by autocatalysis. An FATC domain is found at 2517–2549 (DTLDVPTQVELLIKQATSHENLCQCYIGWCPFW).

Belongs to the PI3/PI4-kinase family. As to quaternary structure, part of the mechanistic target of rapamycin complex 1 (mTORC1) which contains MTOR, MLST8 and RPTOR. The mTORC1 complex is a 1 Md obligate dimer of two stoichiometric heterotetramers with overall dimensions of 290 A x 210 A x 135 A. It has a rhomboid shape and a central cavity, the dimeric interfaces are formed by interlocking interactions between the two MTOR and the two RPTOR subunits. The MLST8 subunit forms distal foot-like protuberances, and contacts only one MTOR within the complex, while the small AKT1S1/PRAS40 localizes to the midsection of the central core, in close proximity to RPTOR. mTORC1 associates with AKT1S1/PRAS40, which inhibits its activity by blocking MTOR substrate-recruitment site. Component of the mechanistic target of rapamycin complex 2 (mTORC2), consisting in two heterotretramers composed of MTOR, MLST8, RICTOR and MAPKAP1/SIN1. Interacts with PLPP7 and PML. Interacts with PRR5 and RICTOR; the interaction is direct within the mTORC2 complex and interaction with RICTOR is enhanced by deubiquitination of RICTOR by USP9X. mTORC1 and mTORC2 associate with DEPTOR, which regulates their activity. Interacts with WAC; WAC positively regulates MTOR activity by promoting the assembly of the TTT complex composed of TELO2, TTI1 and TTI2 and the RUVBL complex composed of RUVBL1 and RUVBL2 into the TTT-RUVBL complex which leads to the dimerization of the mTORC1 complex and its subsequent activation. Interacts with UBQLN1. Interacts with TTI1 and TELO2. Interacts with CLIP1; phosphorylates and regulates CLIP1. Interacts with NBN. Interacts with HTR6. Interacts with BRAT1. Interacts with MEAK7 (via C-terminal domain); the interaction increases upon nutrient stimulation. Interacts with TM4SF5; the interaction is positively regulated by arginine and is negatively regulated by leucine. Interacts with GPR137B. Interacts with NCKAP1L. Interacts with TPCN1 and TPCN2; the interaction is required for TPCN1 and TPCN2 sensitivity to ATP. Interacts with ATP6V1A and with CRYAB, forming a ternary complex. Interacts with SLC38A7; this interaction mediates the recruitment of mTORC1 to the lysosome and its subsequent activation. Interacts with TSPAN8. In terms of processing, autophosphorylates when part of mTORC1 or mTORC2. Phosphorylation at Ser-1261, Ser-2159 and Thr-2164 promotes autophosphorylation. Phosphorylated at Ser-2448 by RPS6KB1. Phosphorylation in the kinase domain modulates the interactions of MTOR with RPTOR and AKT1S1/PRAS40 and leads to increased intrinsic mTORC1 kinase activity. Phosphorylation at Ser-2159 by TBK1 in response to growth factors and pathogen recognition receptors promotes mTORC1 activity. Phosphorylation at Ser-2159 by TBK1 in response to EGF growth factor promotes mTORC2 activity, leading to AKT1 phosphorylation and activation. Phosphorylation at Thr-2173 in the ATP-binding region by AKT1 strongly reduces kinase activity. Post-translationally, ubiquitinated at Lys-2066 by the SCF(FBXO22) complex via 'Lys-27'-linked ubiquitination prevents mTORC1 substrate recruitment. Expressed in numerous tissues, with highest levels in testis.

The protein localises to the lysosome membrane. The protein resides in the endoplasmic reticulum membrane. Its subcellular location is the golgi apparatus membrane. It is found in the cell membrane. It localises to the mitochondrion outer membrane. The protein localises to the cytoplasm. The protein resides in the nucleus. Its subcellular location is the PML body. It is found in the microsome membrane. It localises to the cytoplasmic vesicle. The protein localises to the phagosome. It catalyses the reaction L-seryl-[protein] + ATP = O-phospho-L-seryl-[protein] + ADP + H(+). It carries out the reaction L-threonyl-[protein] + ATP = O-phospho-L-threonyl-[protein] + ADP + H(+). The catalysed reaction is L-tyrosyl-[protein] + ATP = O-phospho-L-tyrosyl-[protein] + ADP + H(+). The mTORC1 complex is activated in response to nutrients, growth factors or amino acids: activation requires relocalization of the mTORC1 complex to lysosomes that is mediated by the Ragulator complex, SLC38A9, and the Rag GTPases RagA/RRAGA, RagB/RRAGB, RagC/RRAGC and RagD/RRAGD. Activation of mTORC1 by growth factors such as insulin involves AKT1-mediated phosphorylation of TSC1-TSC2, which leads to the activation of the RHEB GTPase a potent activator of the protein kinase activity of mTORC1. Insulin-stimulated and amino acid-dependent phosphorylation at Ser-1261 promotes autophosphorylation and the activation of mTORC1. On the other hand, low cellular energy levels can inhibit mTORC1 through activation of PRKAA1 while hypoxia inhibits mTORC1 through a REDD1-dependent mechanism which may also require PRKAA1. The kinase activity of MTOR within the mTORC1 complex is positively regulated by MLST8. The kinase activity of MTOR is inhibited by DEPTOR and AKT1S1. The non-canonical mTORC1 complex is independent of the RHEB GTPase and specifically mediates phosphorylation of MiT/TFE factors TFEB and TFE3 but not other mTORC1 substrates: it is activated by FLCN, which activates Rag GTPases RagC/RRAGC and RagD/RRAGD. MTOR is the target of the immunosuppressive and anti-cancer drug rapamycin which acts in complex with FKBP1A/FKBP12, and specifically inhibits its kinase activity. mTORC2 is also activated by growth factors, but seems to be nutrient-insensitive. mTORC2 associates and is directly activated by ribosomes. mTORC2 may also be regulated by RHEB but in an indirect manner through the PI3K signaling pathway. In terms of biological role, serine/threonine protein kinase which is a central regulator of cellular metabolism, growth and survival in response to hormones, growth factors, nutrients, energy and stress signals. MTOR directly or indirectly regulates the phosphorylation of at least 800 proteins. Functions as part of 2 structurally and functionally distinct signaling complexes mTORC1 and mTORC2 (mTOR complex 1 and 2). In response to nutrients, growth factors or amino acids, mTORC1 is recruited to the lysosome membrane and promotes protein, lipid and nucleotide synthesis by phosphorylating key regulators of mRNA translation and ribosome synthesis. This includes phosphorylation of EIF4EBP1 and release of its inhibition toward the elongation initiation factor 4E (eiF4E). Moreover, phosphorylates and activates RPS6KB1 and RPS6KB2 that promote protein synthesis by modulating the activity of their downstream targets including ribosomal protein S6, eukaryotic translation initiation factor EIF4B, and the inhibitor of translation initiation PDCD4. Stimulates the pyrimidine biosynthesis pathway, both by acute regulation through RPS6KB1-mediated phosphorylation of the biosynthetic enzyme CAD, and delayed regulation, through transcriptional enhancement of the pentose phosphate pathway which produces 5-phosphoribosyl-1-pyrophosphate (PRPP), an allosteric activator of CAD at a later step in synthesis, this function is dependent on the mTORC1 complex. Regulates ribosome synthesis by activating RNA polymerase III-dependent transcription through phosphorylation and inhibition of MAF1 an RNA polymerase III-repressor. Activates dormant ribosomes by mediating phosphorylation of SERBP1, leading to SERBP1 inactivation and reactivation of translation. In parallel to protein synthesis, also regulates lipid synthesis through SREBF1/SREBP1 and LPIN1. To maintain energy homeostasis mTORC1 may also regulate mitochondrial biogenesis through regulation of PPARGC1A. In the same time, mTORC1 inhibits catabolic pathways: negatively regulates autophagy through phosphorylation of ULK1. Under nutrient sufficiency, phosphorylates ULK1 at 'Ser-758', disrupting the interaction with AMPK and preventing activation of ULK1. Also prevents autophagy through phosphorylation of the autophagy inhibitor DAP. Also prevents autophagy by phosphorylating RUBCNL/Pacer under nutrient-rich conditions. Prevents autophagy by mediating phosphorylation of AMBRA1, thereby inhibiting AMBRA1 ability to mediate ubiquitination of ULK1 and interaction between AMBRA1 and PPP2CA. mTORC1 exerts a feedback control on upstream growth factor signaling that includes phosphorylation and activation of GRB10 a INSR-dependent signaling suppressor. Among other potential targets mTORC1 may phosphorylate CLIP1 and regulate microtubules. The mTORC1 complex is inhibited in response to starvation and amino acid depletion. The non-canonical mTORC1 complex, which acts independently of RHEB, specifically mediates phosphorylation of MiT/TFE factors MITF, TFEB and TFE3 in the presence of nutrients, promoting their cytosolic retention and inactivation. Upon starvation or lysosomal stress, inhibition of mTORC1 induces dephosphorylation and nuclear translocation of TFEB and TFE3, promoting their transcription factor activity. The mTORC1 complex regulates pyroptosis in macrophages by promoting GSDMD oligomerization. MTOR phosphorylates RPTOR which in turn inhibits mTORC1. As part of the mTORC2 complex, MTOR transduces signals from growth factors to pathways involved in proliferation, cytoskeletal organization, lipogenesis and anabolic output. In response to growth factors, mTORC2 phosphorylates and activates AGC protein kinase family members, including AKT (AKT1, AKT2 and AKT3), PKC (PRKCA, PRKCB and PRKCE) and SGK1. In contrast to mTORC1, mTORC2 is nutrient-insensitive. mTORC2 plays a critical role in AKT1 activation by mediating phosphorylation of different sites depending on the context, such as 'Thr-450', 'Ser-473', 'Ser-477' or 'Thr-479', facilitating the phosphorylation of the activation loop of AKT1 on 'Thr-308' by PDPK1/PDK1 which is a prerequisite for full activation. mTORC2 also regulates the phosphorylation of SGK1 at 'Ser-422'. mTORC2 may regulate the actin cytoskeleton, through phosphorylation of PRKCA, PXN and activation of the Rho-type guanine nucleotide exchange factors RHOA and RAC1A or RAC1B. The mTORC2 complex also phosphorylates various proteins involved in insulin signaling, such as FBXW8 and IGF2BP1. May also regulate insulin signaling by acting as a tyrosine protein kinase that catalyzes phosphorylation of IGF1R and INSR; additional evidence are however required to confirm this result in vivo. Regulates osteoclastogenesis by adjusting the expression of CEBPB isoforms. Plays an important regulatory role in the circadian clock function; regulates period length and rhythm amplitude of the suprachiasmatic nucleus (SCN) and liver clocks. This chain is Serine/threonine-protein kinase mTOR, found in Homo sapiens (Human).